The following is a 141-amino-acid chain: Putative pre-16S rRNA nuclease (141 aa).

Belongs to the YqgF nuclease family.

It is found in the cytoplasm. Its function is as follows. Could be a nuclease involved in processing of the 5'-end of pre-16S rRNA. The polypeptide is Putative pre-16S rRNA nuclease (Coxiella burnetii (strain RSA 331 / Henzerling II)).